The chain runs to 264 residues: Glycerol uptake facilitator protein (264 aa).

Topologically, residues 1–3 (MDK) are cytoplasmic. The helical transmembrane segment at 4-32 (SLKANCIGEFLGTALLIFFGVGCVAALKV) threads the bilayer. Residues 33-37 (AGASF) lie on the Periplasmic side of the membrane. A helical transmembrane segment spans residues 38–58 (GLWEISIMWGMGVALAVYATA). Residues 59–61 (GLS) are Cytoplasmic-facing. Residues 62–65 (GAHL) lie within the membrane without spanning it. The short motif at 66–68 (NPA) is the NPA 1 element. The segment at residues 66-76 (NPAVTIALWKF) is an intramembrane region (helical). Residues 77 to 82 (ACFDGK) lie on the Cytoplasmic side of the membrane. A helical membrane pass occupies residues 83–106 (KVIPYIISQMLGAFFAAALVYALY). Over 107–141 (RNVFIDYETVHNIVRGTQESLSLAGTFSTYPHPSL) the chain is Periplasmic. Residues 142-167 (SIGGAFAVEFVITAILMALIMALTDD) traverse the membrane as a helical segment. Residues 168–175 (GNGVPRGP) lie on the Cytoplasmic side of the membrane. The helical transmembrane segment at 176–192 (LAPLLIGILIAVIGGAM) threads the bilayer. Residues 193-196 (GPLT) are Periplasmic-facing. An intramembrane segment occupies 197–200 (GFAM). The NPA 2 motif lies at 201 to 203 (NPA). The helical intramembrane region spans 201 to 214 (NPARDFGPKFFAYL). The Periplasmic segment spans residues 215–229 (AGWGELALTGGREIP). Residues 230-252 (YFIVPMVAPVLGALAGAWLYKKA) form a helical membrane-spanning segment. Over 253-264 (IGGNLPCNCGCE) the chain is Cytoplasmic.

This sequence belongs to the MIP/aquaporin (TC 1.A.8) family.

Its subcellular location is the cell inner membrane. It catalyses the reaction glycerol(in) = glycerol(out). Its function is as follows. Mediates glycerol diffusion across the cytoplasmic membrane via a pore-type mechanism. This is Glycerol uptake facilitator protein (glpF) from Haemophilus influenzae (strain ATCC 51907 / DSM 11121 / KW20 / Rd).